The following is a 396-amino-acid chain: Corticosteroid-binding globulin (396 aa).

The first 22 residues, methionine 1–alanine 22, serve as a signal peptide directing secretion. Asparagine 88 and asparagine 216 each carry an N-linked (GlcNAc...) asparagine glycan. Residue glutamine 246 participates in cortisol binding. A glycan (N-linked (GlcNAc...) asparagine) is linked at asparagine 252. Aspartate 278 serves as a coordination point for cortisol. 2 N-linked (GlcNAc...) asparagine glycosylation sites follow: asparagine 319 and asparagine 352. Residue tryptophan 384 coordinates cortisol.

It belongs to the serpin family. As to expression, expressed by the liver; secreted in plasma.

It is found in the secreted. Functionally, major transport protein for glucocorticoids and progestins in the blood of almost all vertebrate species. The chain is Corticosteroid-binding globulin (Serpina6) from Rattus norvegicus (Rat).